The sequence spans 184 residues: Small ribosomal subunit protein uS4 (184 aa).

Residues 108–172 (RRLQTQVHRL…SPMTKESHPE (65 aa)) form the S4 RNA-binding domain. Residues 163–184 (SPMTKESHPERPAQIAASVVEE) form a disordered region.

Belongs to the universal ribosomal protein uS4 family. In terms of assembly, part of the 30S ribosomal subunit. Contacts protein S5. The interaction surface between S4 and S5 is involved in control of translational fidelity.

Functionally, one of the primary rRNA binding proteins, it binds directly to 16S rRNA where it nucleates assembly of the body of the 30S subunit. Its function is as follows. With S5 and S12 plays an important role in translational accuracy. This chain is Small ribosomal subunit protein uS4, found in Methanococcoides burtonii (strain DSM 6242 / NBRC 107633 / OCM 468 / ACE-M).